The primary structure comprises 413 residues: Type II methyltransferase M.NaeI (413 aa).

The SAM-dependent MTase C5-type domain occupies 4 to 317 (LEVVEICAGA…KRIRAALNME (314 aa)). C78 is a catalytic residue.

Belongs to the class I-like SAM-binding methyltransferase superfamily. C5-methyltransferase family.

It catalyses the reaction a 2'-deoxycytidine in DNA + S-adenosyl-L-methionine = a 5-methyl-2'-deoxycytidine in DNA + S-adenosyl-L-homocysteine + H(+). In terms of biological role, a methylase that recognizes the double-stranded sequence 5'-GCCGGC-3', methylates C-? on both strands, and protects the DNA from cleavage by the NaeI endonuclease. The chain is Type II methyltransferase M.NaeI from Lentzea aerocolonigenes (Lechevalieria aerocolonigenes).